A 1401-amino-acid polypeptide reads, in one-letter code: Lysine-specific demethylase 6A (1401 aa).

The interval 1-1095 (MKSCGVSLAT…TNIDLSDDKK (1095 aa)) is interaction with SUPT6H. TPR repeat units follow at residues 95–128 (SDFF…QSDY), 132–165 (AAFL…DPSF), 169–203 (KEIH…NPCT), 207–240 (AEIQ…ENLS), 245–285 (ATIL…DPNS), 286–319 (GQSW…SEAS), 321–353 (DTWC…DHGH), and 355–387 (AAWM…KNCS). Residues 439-453 (AMNTAQQNTSDNWSG) are compositionally biased toward polar residues. Residues 439–463 (AMNTAQQNTSDNWSGGNAPPPVEQQ) form a disordered region. Residues Arg519 and Arg549 each carry the omega-N-methylarginine modification. 3 stretches are compositionally biased toward polar residues: residues 596-606 (NHVTGSGSNGN), 619-642 (HNRT…STQG), and 660-743 (LSST…STAS). Positions 596 to 745 (NHVTGSGSNG…ETPNSTASVE (150 aa)) are disordered. Phosphoserine is present on Ser769. 3 disordered regions span residues 795 to 863 (GTCD…EESQ), 914 to 941 (LLDK…PPTP), and 1043 to 1080 (FQES…GPFK). Residues 814 to 833 (SVASSPSSAISTATPSPKST) are compositionally biased toward low complexity. Residue Thr827 is modified to Phosphothreonine. Phosphoserine is present on Ser829. Residues 834 to 848 (EQTTTNSVTSLNSPH) are compositionally biased toward polar residues. The segment covering 918 to 931 (CPPPRPPSSPYPPL) has biased composition (pro residues). Positions 1046–1063 (SLREENEKRSHHKDHSDS) are enriched in basic and acidic residues. Residues 1095-1258 (KWKLQLHELT…YKLAVERYEW (164 aa)) enclose the JmjC domain. Positions 1146, 1148, and 1226 each coordinate Fe cation. The Zn(2+) site is built by Cys1331, Cys1334, Cys1358, and Cys1361.

Belongs to the UTX family. In terms of assembly, component of the MLL2/3 complex (also named ASCOM complex), at least composed of KMT2D/MLL2 or KMT2C/MLL3, ASH2L, RBBP5, WDR5, NCOA6, DPY30, KDM6A (or KDM6B), PAXIP1/PTIP, PAGR1 and alpha- and beta-tubulin. Interacts with TLE1. Interacts with SUPT6H. Interacts with SMARCA4. Interacts with PROSER1. L-ascorbate serves as cofactor. It depends on Fe(2+) as a cofactor. Expressed in brain, heart and spleen.

It localises to the nucleus. The catalysed reaction is N(6),N(6),N(6)-trimethyl-L-lysyl(27)-[histone H3] + 2 2-oxoglutarate + 2 O2 = N(6)-methyl-L-lysyl(27)-[histone H3] + 2 formaldehyde + 2 succinate + 2 CO2. Histone demethylase that specifically demethylates 'Lys-27' of histone H3, thereby playing a central role in histone code. Demethylates trimethylated and dimethylated but not monomethylated H3 'Lys-27'. Plays a central role in regulation of posterior development, by regulating HOX gene expression. Demethylation of 'Lys-27' of histone H3 is concomitant with methylation of 'Lys-4' of histone H3, and regulates the recruitment of the PRC1 complex and monoubiquitination of histone H2A. Plays a demethylase-independent role in chromatin remodeling to regulate T-box family member-dependent gene expression. The polypeptide is Lysine-specific demethylase 6A (Kdm6a) (Mus musculus (Mouse)).